The sequence spans 296 residues: Myozenin-1 (296 aa).

S82 is subject to Phosphoserine. Gly residues-rich tracts occupy residues 105–117 (FSYG…GQAG) and 134–170 (SGFG…QAGG). Positions 105-172 (FSYGKGSSGG…GSGDQAGGDG (68 aa)) are disordered.

Belongs to the myozenin family. In terms of assembly, interacts with ACTN2, ACTN3, FLNA, FLNB, FLNC, LDB3, PPP3CA and TCAP. Interacts via its C-terminal region with MYOT. In terms of tissue distribution, expressed primarily in skeletal muscle and specifically enriched in the gastrocnemius, which is composed predominantly of fast-twitch muscle fibers. Detected at lower levels in heart.

It is found in the nucleus. Its subcellular location is the cell projection. It localises to the pseudopodium. In terms of biological role, myozenins may serve as intracellular binding proteins involved in linking Z-disk proteins such as alpha-actinin, gamma-filamin, TCAP/telethonin, LDB3/ZASP and localizing calcineurin signaling to the sarcomere. Plays an important role in the modulation of calcineurin signaling. May play a role in myofibrillogenesis. The sequence is that of Myozenin-1 from Mus musculus (Mouse).